A 108-amino-acid polypeptide reads, in one-letter code: Glutaredoxin-C10 (108 aa).

Positions 1 to 107 (MERVAKLASE…PMLKNAGALW (107 aa)) constitute a Glutaredoxin domain. An intrachain disulfide couples Cys21 to Cys24. Positions 105 to 108 (ALWL) match the Responsive for interaction with TGA factors motif.

This sequence belongs to the glutaredoxin family. CC-type subfamily.

The protein localises to the cytoplasm. The protein resides in the nucleus. Functionally, has a glutathione-disulfide oxidoreductase activity in the presence of NADPH and glutathione reductase. Reduces low molecular weight disulfides and proteins. This is Glutaredoxin-C10 (GRXC10) from Oryza sativa subsp. japonica (Rice).